The sequence spans 140 residues: Pro-Viral epidermal growth factor (140 aa).

Positions 1 to 18 (MSMKYLMLLFAAMIIRSF) are cleaved as a signal peptide. Residues 19 to 100 (ADSGNAIETT…SENPNTTTSY (82 aa)) lie on the Extracellular side of the membrane. Residue N34 is glycosylated (N-linked (GlcNAc...) asparagine; by host). Residues 41–81 (AIRLCGPEGDGYCLHGDCIHARDIDGMYCRCSHGYTGIRCQ) enclose the EGF-like domain. 3 cysteine pairs are disulfide-bonded: C45–C58, C53–C69, and C71–C80. N95 carries N-linked (GlcNAc...) asparagine; by host glycosylation. The chain crosses the membrane as a helical span at residues 101-121 (IPSPGIMLVLVGIIIITCCLL). Over 122-140 (SVYRFTRRTKLPIQDMVVP) the chain is Cytoplasmic.

Belongs to the orthopoxvirus OPG019 family. As to quaternary structure, viral epidermal growth factor interacts with host EGFR and promotes EGFR dimerization. Cleaved at the cell surface by host ADAM10, thereby releasing the secreted form of VGF.

The protein resides in the host membrane. The protein localises to the secreted. Functionally, stimulates cellular proliferation (hyperplasia)and mobility around infected cells to promote rapid and efficient spread of infection. This effect is beneficial for virus replication in vivo, because poxviruses replicate possibly better in proliferating cells than in quiescent cells. Acts by binding host EGFR, inducing its dimerization, autophosphorylation and leading to activation of several cellular pathways regulating cell proliferation or cell survival. The activation by host EGFR of mitogen activated protein kinases (MAPK) and extracellular-signal regulated kinases (ERK) are essential for the positive effect of vaccinia growth factor on poxvirus virulence in vivo. This is Pro-Viral epidermal growth factor (OPG019) from Bos taurus (Bovine).